The chain runs to 278 residues: Extracellular metalloprotease GLRG_06511 (278 aa).

A signal peptide spans 1 to 19 (MQFKSLLVSALAAASTALA). An N-linked (GlcNAc...) asparagine glycan is attached at Asn51. Residue His190 participates in Zn(2+) binding. Glu191 is an active-site residue. His194 is a Zn(2+) binding site. Cys227 and Cys254 are disulfide-bonded.

Belongs to the peptidase M43B family.

Its subcellular location is the secreted. Secreted metalloproteinase that allows assimilation of proteinaceous substrates. The protein is Extracellular metalloprotease GLRG_06511 of Colletotrichum graminicola (strain M1.001 / M2 / FGSC 10212) (Maize anthracnose fungus).